The sequence spans 303 residues: Type II methyltransferase M.MjaI (303 aa).

The protein belongs to the N(4)/N(6)-methyltransferase family. N(4) subfamily.

It carries out the reaction a 2'-deoxycytidine in DNA + S-adenosyl-L-methionine = an N(4)-methyl-2'-deoxycytidine in DNA + S-adenosyl-L-homocysteine + H(+). Its function is as follows. A beta subtype methylase that recognizes the double-stranded sequence 5'-CTAG-3', methylates C-1 on both strands, and protects the DNA from cleavage by the MjaI endonuclease. The sequence is that of Type II methyltransferase M.MjaI (mjaIM) from Methanocaldococcus jannaschii (strain ATCC 43067 / DSM 2661 / JAL-1 / JCM 10045 / NBRC 100440) (Methanococcus jannaschii).